The sequence spans 421 residues: Gamma-glutamyl phosphate reductase (421 aa).

It belongs to the gamma-glutamyl phosphate reductase family.

It is found in the cytoplasm. It catalyses the reaction L-glutamate 5-semialdehyde + phosphate + NADP(+) = L-glutamyl 5-phosphate + NADPH + H(+). Its pathway is amino-acid biosynthesis; L-proline biosynthesis; L-glutamate 5-semialdehyde from L-glutamate: step 2/2. Catalyzes the NADPH-dependent reduction of L-glutamate 5-phosphate into L-glutamate 5-semialdehyde and phosphate. The product spontaneously undergoes cyclization to form 1-pyrroline-5-carboxylate. The polypeptide is Gamma-glutamyl phosphate reductase (Pseudomonas aeruginosa (strain UCBPP-PA14)).